The chain runs to 247 residues: Probable chemoreceptor glutamine deamidase CheD (247 aa).

Residues 204 to 247 are disordered; sequence KRPAAPQPARPRIELFGGRGTAPGAGSPSAGSPYAANLSRKQEA. Residues 227 to 239 are compositionally biased toward low complexity; sequence GAGSPSAGSPYAA.

The protein belongs to the CheD family.

The enzyme catalyses L-glutaminyl-[protein] + H2O = L-glutamyl-[protein] + NH4(+). In terms of biological role, probably deamidates glutamine residues to glutamate on methyl-accepting chemotaxis receptors (MCPs), playing an important role in chemotaxis. The protein is Probable chemoreceptor glutamine deamidase CheD of Burkholderia orbicola (strain AU 1054).